Here is a 332-residue protein sequence, read N- to C-terminus: Holliday junction branch migration complex subunit RuvB (332 aa).

A large ATPase domain (RuvB-L) region spans residues 1 to 182; it reads MNKNFIESNL…FAFTCRLEYY (182 aa). Residues leucine 21, arginine 22, glycine 63, lysine 66, threonine 67, threonine 68, 129–131, arginine 172, tyrosine 182, and arginine 219 each bind ATP; that span reads EDF. Threonine 67 is a Mg(2+) binding site. The interval 183-253 is small ATPAse domain (RuvB-S); that stretch reads DPMILQKILL…VANRALTMLS (71 aa). The interval 256–332 is head domain (RuvB-H); that stretch reads EKGLDEMDKK…YQHIVGSSQR (77 aa). DNA-binding residues include arginine 311 and arginine 316.

This sequence belongs to the RuvB family. As to quaternary structure, homohexamer. Forms an RuvA(8)-RuvB(12)-Holliday junction (HJ) complex. HJ DNA is sandwiched between 2 RuvA tetramers; dsDNA enters through RuvA and exits via RuvB. An RuvB hexamer assembles on each DNA strand where it exits the tetramer. Each RuvB hexamer is contacted by two RuvA subunits (via domain III) on 2 adjacent RuvB subunits; this complex drives branch migration. In the full resolvosome a probable DNA-RuvA(4)-RuvB(12)-RuvC(2) complex forms which resolves the HJ.

Its subcellular location is the cytoplasm. It catalyses the reaction ATP + H2O = ADP + phosphate + H(+). The RuvA-RuvB-RuvC complex processes Holliday junction (HJ) DNA during genetic recombination and DNA repair, while the RuvA-RuvB complex plays an important role in the rescue of blocked DNA replication forks via replication fork reversal (RFR). RuvA specifically binds to HJ cruciform DNA, conferring on it an open structure. The RuvB hexamer acts as an ATP-dependent pump, pulling dsDNA into and through the RuvAB complex. RuvB forms 2 homohexamers on either side of HJ DNA bound by 1 or 2 RuvA tetramers; 4 subunits per hexamer contact DNA at a time. Coordinated motions by a converter formed by DNA-disengaged RuvB subunits stimulates ATP hydrolysis and nucleotide exchange. Immobilization of the converter enables RuvB to convert the ATP-contained energy into a lever motion, pulling 2 nucleotides of DNA out of the RuvA tetramer per ATP hydrolyzed, thus driving DNA branch migration. The RuvB motors rotate together with the DNA substrate, which together with the progressing nucleotide cycle form the mechanistic basis for DNA recombination by continuous HJ branch migration. Branch migration allows RuvC to scan DNA until it finds its consensus sequence, where it cleaves and resolves cruciform DNA. This Protochlamydia amoebophila (strain UWE25) protein is Holliday junction branch migration complex subunit RuvB.